A 372-amino-acid chain; its full sequence is DNA replication and repair protein RecF (372 aa).

30-37 (GENAQGKT) lines the ATP pocket.

The protein belongs to the RecF family.

The protein localises to the cytoplasm. Functionally, the RecF protein is involved in DNA metabolism; it is required for DNA replication and normal SOS inducibility. RecF binds preferentially to single-stranded, linear DNA. It also seems to bind ATP. This chain is DNA replication and repair protein RecF, found in Shouchella clausii (strain KSM-K16) (Alkalihalobacillus clausii).